The chain runs to 228 residues: CD9 antigen (228 aa).

At 1–12 (MPVKGGTKCIKY) the chain is on the cytoplasmic side. C9 carries the S-palmitoyl cysteine lipid modification. A helical membrane pass occupies residues 13–33 (LLFGFNFIFWLAGIAVLAIGL). The Extracellular segment spans residues 34–55 (WLRFDSQTKSIFEQETNNNNSS). 2 N-linked (GlcNAc...) asparagine glycosylation sites follow: N52 and N53. Residues 56–76 (FYTGVYILIGAGALMMLVGFL) traverse the membrane as a helical segment. The Cytoplasmic segment spans residues 77 to 87 (GCCGAVQESQC). Residues C78, C79, and C87 are each lipidated (S-palmitoyl cysteine). Residues 88–111 (MLGLFFGFLLVIFAIEIAAAIWGY) traverse the membrane as a helical segment. At 112-195 (SHKDEVIKEV…KEVFDNKFHI (84 aa)) the chain is on the extracellular side. 2 cysteine pairs are disulfide-bonded: C152–C181 and C153–C167. The helical transmembrane segment at 196-221 (IGAVGIGIAVVMIFGMIFSMILCCAI) threads the bilayer. 2 S-palmitoyl cysteine lipidation sites follow: C218 and C219. Topologically, residues 222 to 228 (RRNREMV) are cytoplasmic.

The protein belongs to the tetraspanin (TM4SF) family. Forms both disulfide-linked homodimers and higher homooligomers as well as heterooligomers with other members of the tetraspanin family. Interacts (via the second extracellular domain) with integrin ITGAV:ITGB3. Interacts with integrin ITGA6:ITGB1; interaction takes place in oocytes and is involved in sperm-egg fusion. Part of integrin-tetraspanin complexes composed of CD81, beta-1 and beta-2 integrins in the membrane of monocyte/macrophages. Interacts with CD63; identified in a complex with CD63 and ITGB3. Associates with CR2/CD21 and with PTGFRN/CD9P1. Part of a complex composed of CD9, CD81, PTGFRN and IGSF8. Interacts directly with IGSF8. Interacts with PDPN; this interaction is homophilic and attenuates platelet aggregation and pulmonary metastasis induced by PDPN. Interacts (on T cell side) with CD81 at immunological synapses between antigen-presenting cells and T cells. Palmitoylated at a low, basal level in unstimulated platelets. The level of palmitoylation increases when platelets are activated by thrombin (in vitro). The protein exists in three forms with molecular masses between 22 and 27 kDa, and is known to carry covalently linked fatty acids. Palmitoylation by ZDHHC2 regulates CD9 expression, association with other tetraspanin family proteins and function in cell adhesion.

The protein resides in the cell membrane. Its subcellular location is the membrane. It localises to the secreted. The protein localises to the extracellular exosome. Its function is as follows. Integral membrane protein associated with integrins, which regulates different processes, such as sperm-egg fusion, platelet activation and aggregation, and cell adhesion. Present at the cell surface of oocytes and plays a key role in sperm-egg fusion, possibly by organizing multiprotein complexes and the morphology of the membrane required for the fusion. In myoblasts, associates with CD81 and PTGFRN and inhibits myotube fusion during muscle regeneration. In macrophages, associates with CD81 and beta-1 and beta-2 integrins, and prevents macrophage fusion into multinucleated giant cells specialized in ingesting complement-opsonized large particles. Also prevents the fusion between mononuclear cell progenitors into osteoclasts in charge of bone resorption. Acts as a receptor for PSG17. Involved in platelet activation and aggregation. Regulates paranodal junction formation. Involved in cell adhesion, cell motility and tumor metastasis. The sequence is that of CD9 antigen from Chlorocebus aethiops (Green monkey).